The chain runs to 241 residues: MSEEEAHKTVEVDDVGVQLDEGDEEDLLEYDDELVEEQPSDARIRNVAETLMKSELPKVTVEYKDTTFLLFTSDDKNESNNPIICENAALYQRPMGEFMESIRKFMGNRFGRLAFATKELVLQLKSLDLTLFEDNVYNNHISFSDVYTIFKILKERSESNFETDIPTHLAIELSTRPRFVSRYNALVELTESSATLKNIKPFSNDETHPLIVDDNDQYTHQNTSEVIVMDIDDDVGEDSED.

This sequence belongs to the RMR1 family. In terms of processing, sumoylated.

Its subcellular location is the cytoplasm. It is found in the nucleus. In terms of biological role, required for normal levels of gene conversion events during meiosis. This is Reduced meiotic recombination protein 1 (RMR1) from Saccharomyces cerevisiae (strain ATCC 204508 / S288c) (Baker's yeast).